Reading from the N-terminus, the 54-residue chain is MLYYSIVFLLIALVAGLFGFVGIAGVATGIAKILFFVFLIAFVVSLVIGRRPRV.

The next 2 membrane-spanning stretches (helical) occupy residues 6–26 (IVFL…IAGV) and 29–49 (GIAK…LVIG).

This sequence belongs to the UPF0391 family.

It is found in the cell membrane. This Saccharophagus degradans (strain 2-40 / ATCC 43961 / DSM 17024) protein is UPF0391 membrane protein Sde_0270.